Reading from the N-terminus, the 477-residue chain is Ankyrin repeat, SAM and basic leucine zipper domain-containing protein 1 (477 aa).

A disordered region spans residues Met1 to Gly24. Residues Ser17, Ser18, and Ser20 each carry the phosphoserine modification. ANK repeat units lie at residues Glu45–Ser74, Tyr78–Phe107, Asp110–Val144, Arg148–Ala177, Asn181–Leu210, and Asp214–Gly243. One can recognise an SAM domain in the interval Ser272–Met334.

In terms of assembly, interacts with DDX4, PIWIL1, RANBP9 and TDRD1.

Its subcellular location is the cytoplasm. Plays a central role during spermatogenesis by repressing transposable elements and preventing their mobilization, which is essential for the germline integrity. Acts via the piRNA metabolic process, which mediates the repression of transposable elements during meiosis by forming complexes composed of piRNAs and Piwi proteins and governs the methylation and subsequent repression of transposons. Its association with pi-bodies suggests a participation in the primary piRNAs metabolic process. Required prior to the pachytene stage to facilitate the production of multiple types of piRNAs, including those associated with repeats involved in the regulation of retrotransposons. May act by mediating protein-protein interactions during germ cell maturation. This chain is Ankyrin repeat, SAM and basic leucine zipper domain-containing protein 1 (ASZ1), found in Echinops telfairi (Lesser hedgehog tenrec).